The chain runs to 345 residues: L-threonine 3-dehydrogenase (345 aa).

Residue C39 coordinates Zn(2+). Residues T41 and H44 each act as charge relay system in the active site. Residues H64, E65, C94, C97, C100, and C108 each coordinate Zn(2+). Residues I176, D196, R201, 263–265 (LGI), and 287–288 (VY) contribute to the NAD(+) site.

The protein belongs to the zinc-containing alcohol dehydrogenase family. As to quaternary structure, homotetramer. Zn(2+) serves as cofactor.

It is found in the cytoplasm. It catalyses the reaction L-threonine + NAD(+) = (2S)-2-amino-3-oxobutanoate + NADH + H(+). It functions in the pathway amino-acid degradation; L-threonine degradation via oxydo-reductase pathway; glycine from L-threonine: step 1/2. Catalyzes the NAD(+)-dependent oxidation of L-threonine to 2-amino-3-ketobutyrate. The chain is L-threonine 3-dehydrogenase from Anaeromyxobacter dehalogenans (strain 2CP-1 / ATCC BAA-258).